The following is a 132-amino-acid chain: Transcription antitermination protein NusB (132 aa).

The protein belongs to the NusB family.

Involved in transcription antitermination. Required for transcription of ribosomal RNA (rRNA) genes. Binds specifically to the boxA antiterminator sequence of the ribosomal RNA (rrn) operons. This chain is Transcription antitermination protein NusB, found in Sulfurimonas denitrificans (strain ATCC 33889 / DSM 1251) (Thiomicrospira denitrificans (strain ATCC 33889 / DSM 1251)).